The sequence spans 182 residues: Glycerol-3-phosphate acyltransferase 1 (182 aa).

5 helical membrane-spanning segments follow: residues 5–25 (MQFLYLVASYLIGNILTAYIV), 54–74 (GYFIATFLGDAIKGAIVVAVA), 81–101 (PTFVMLTLLAVIIGHIYPVLF), 117–137 (IAFDYLIALTLLGIFIVFYLI), and 157–177 (ILYSYSIVTTILSGIIIVLIL).

This sequence belongs to the PlsY family. Probably interacts with PlsX.

The protein localises to the cell membrane. It carries out the reaction an acyl phosphate + sn-glycerol 3-phosphate = a 1-acyl-sn-glycero-3-phosphate + phosphate. It participates in lipid metabolism; phospholipid metabolism. Catalyzes the transfer of an acyl group from acyl-phosphate (acyl-PO(4)) to glycerol-3-phosphate (G3P) to form lysophosphatidic acid (LPA). This enzyme utilizes acyl-phosphate as fatty acyl donor, but not acyl-CoA or acyl-ACP. This chain is Glycerol-3-phosphate acyltransferase 1, found in Bacillus cereus (strain ATCC 14579 / DSM 31 / CCUG 7414 / JCM 2152 / NBRC 15305 / NCIMB 9373 / NCTC 2599 / NRRL B-3711).